A 505-amino-acid chain; its full sequence is MASIDFRNKINWHRRYRSPQGVKTEHEILRIFESDRGRIINSPAIRRLQQKTQVFPLERNAAVRTRLTHSMEVQQVGRYIAKEILSRLKEQNRLEEYGLDALTGPFESIVEMACLMHDIGNPPFGHFGEAAINDWFRQWLHPEDAESQPLTHDRCVVSSLRLQEGEENLNDIRRKVRQDICHFEGNAQGIRLVHTLMRMNLTWAQVGGILKYTRPAWWRGPVPDSHRYLMKKPGYYLSEEKYIARLRKELQLAPYSRFPLTWIMEAADDISYCVADLEDAVEKRIFSVEQLYHHLYHAWGHHEKDSLFELVVGNAWEKSRANTLSRSTEDQFFMYLRVNTLNKLVSYAAQRFIDNLPQIFAGTFNQALLEDASGFSRLLELYKNVAVEHVFSHPDVEQLELQGYRVISGLLDIYQPLLSLSLNDFRELVEKERLKRFPIESRLFQKLSTRHRLAYVEVVSKLPTDSAEYPVLEYYYRCRLIQDYISGMTDLYAWDEYRRLMAVEQ.

The region spanning 66 to 273 (RLTHSMEVQQ…MEAADDISYC (208 aa)) is the HD domain.

The protein belongs to the dGTPase family. Type 1 subfamily. In terms of assembly, homotetramer. The cofactor is Mg(2+).

It catalyses the reaction dGTP + H2O = 2'-deoxyguanosine + triphosphate + H(+). Its function is as follows. dGTPase preferentially hydrolyzes dGTP over the other canonical NTPs. The chain is Deoxyguanosinetriphosphate triphosphohydrolase from Salmonella paratyphi A (strain AKU_12601).